A 210-amino-acid polypeptide reads, in one-letter code: Probable GTP-binding protein EngB (210 aa).

The 175-residue stretch at 30–204 (QGYEVAFAGR…YRVLADWMEL (175 aa)) folds into the EngB-type G domain. Residues 38 to 45 (GRSNAGKS), 64 to 68 (GRTQL), 82 to 85 (DLPG), 149 to 152 (TKAD), and 182 to 185 (LFSA) contribute to the GTP site. Mg(2+) is bound by residues Ser45 and Thr66.

The protein belongs to the TRAFAC class TrmE-Era-EngA-EngB-Septin-like GTPase superfamily. EngB GTPase family. Requires Mg(2+) as cofactor.

Its function is as follows. Necessary for normal cell division and for the maintenance of normal septation. In Pseudomonas putida (strain ATCC 47054 / DSM 6125 / CFBP 8728 / NCIMB 11950 / KT2440), this protein is Probable GTP-binding protein EngB.